We begin with the raw amino-acid sequence, 105 residues long: DNA-directed RNA polymerase subunit omega (105 aa).

The protein belongs to the RNA polymerase subunit omega family. The RNAP catalytic core consists of 2 alpha, 1 beta, 1 beta' and 1 omega subunit. When a sigma factor is associated with the core the holoenzyme is formed, which can initiate transcription.

It carries out the reaction RNA(n) + a ribonucleoside 5'-triphosphate = RNA(n+1) + diphosphate. Its function is as follows. Promotes RNA polymerase assembly. Latches the N- and C-terminal regions of the beta' subunit thereby facilitating its interaction with the beta and alpha subunits. The protein is DNA-directed RNA polymerase subunit omega of Streptococcus mutans serotype c (strain ATCC 700610 / UA159).